A 313-amino-acid polypeptide reads, in one-letter code: L-lactate dehydrogenase 1 (313 aa).

Residues valine 15, aspartate 36, arginine 41, and tyrosine 66 each coordinate NAD(+). Substrate-binding positions include glutamine 83, arginine 89, and 121–124 (NPVD). NAD(+) is bound by residues 119 to 121 (ASN) and serine 144. 149-152 (DTAR) lines the substrate pocket. Beta-D-fructose 1,6-bisphosphate-binding residues include arginine 154 and histidine 169. Residue histidine 176 is the Proton acceptor of the active site. Tyrosine 218 carries the phosphotyrosine modification. Threonine 227 serves as a coordination point for substrate.

This sequence belongs to the LDH/MDH superfamily. LDH family. As to quaternary structure, homotetramer.

The protein resides in the cytoplasm. The enzyme catalyses (S)-lactate + NAD(+) = pyruvate + NADH + H(+). Its pathway is fermentation; pyruvate fermentation to lactate; (S)-lactate from pyruvate: step 1/1. Allosterically activated by fructose 1,6-bisphosphate (FBP). Its function is as follows. Catalyzes the conversion of lactate to pyruvate. This Listeria innocua serovar 6a (strain ATCC BAA-680 / CLIP 11262) protein is L-lactate dehydrogenase 1.